The primary structure comprises 1123 residues: Translation initiation factor IF-2 (1123 aa).

Disordered stretches follow at residues 52-452 (LLKA…KVHI) and 480-512 (LARPSKPKSQQKAAPKPVAAMRKRRKETTRQRQ). Low complexity-rich tracts occupy residues 54–73 (KAGSAPRAAASPSKPAPGKA), 94–113 (KPAASSPPAAPAAPTKAKSP), and 121–133 (AAPSRPAAPKASA). Positions 170 to 187 (PPSPPARPVPQQPSPPSA) are enriched in pro residues. Residues 193–206 (APIRRAAPNDAPRP) are compositionally biased toward low complexity. 2 stretches are compositionally biased toward pro residues: residues 207-217 (ANAPPSRPQPK) and 258-268 (SPRPAVSPRPS). Residues 285 to 304 (RPGAPTRPGTGAGRPSRPGG) are compositionally biased toward low complexity. Over residues 320 to 339 (GNRGEGGRPPGGARPAGGGN) the composition is skewed to gly residues. The segment covering 388–403 (ATPPVSRPTATPPSPA) has biased composition (pro residues). A compositionally biased stretch (gly residues) spans 412–422 (FRPGAGPGGQR). Over residues 425 to 439 (GRPDWDDSAKLDALR) the composition is skewed to basic and acidic residues. Over residues 486 to 499 (PKSQQKAAPKPVAA) the composition is skewed to low complexity. Positions 500–512 (MRKRRKETTRQRQ) are enriched in basic residues. Positions 615 to 787 (RRPPVVTVMG…LLLVTEVEDL (173 aa)) constitute a tr-type G domain. A G1 region spans residues 624 to 631 (GHVDHGKT). 624–631 (GHVDHGKT) is a binding site for GTP. The tract at residues 649–653 (GITQH) is G2. The G3 stretch occupies residues 674–677 (DTPG). GTP contacts are provided by residues 674–678 (DTPGH) and 728–731 (NKID). Residues 728 to 731 (NKID) are G4. Residues 764-766 (SAI) form a G5 region.

Belongs to the TRAFAC class translation factor GTPase superfamily. Classic translation factor GTPase family. IF-2 subfamily.

It localises to the cytoplasm. Its function is as follows. One of the essential components for the initiation of protein synthesis. Protects formylmethionyl-tRNA from spontaneous hydrolysis and promotes its binding to the 30S ribosomal subunits. Also involved in the hydrolysis of GTP during the formation of the 70S ribosomal complex. The sequence is that of Translation initiation factor IF-2 from Synechococcus sp. (strain WH7803).